Here is a 212-residue protein sequence, read N- to C-terminus: MKKINVAPENPQYRIVEIFESLQGEGWNTGMPAVFVRLGKCNLACGWCDTDYLTFGMMGLSDILGRLKTYAARNIIITGGEPTIQPHLDMLLDTLKAEGYFLCLETNGLNPAPPQIDYVATSPKACYAAKYENSCIETADEVRIVADGDVLAFCENMERKIRAHHYYLSPCEQDGAMNIYDTIRQIGILNSRPDASVHWQLSVQTHKWAGIE.

Residues 22–24 (LQG) and arginine 37 contribute to the substrate site. One can recognise a Radical SAM core domain in the interval 28 to 212 (NTGMPAVFVR…VQTHKWAGIE (185 aa)). Positions 41, 45, and 48 each coordinate [4Fe-4S] cluster. Threonine 50 provides a ligand contact to Mg(2+). A substrate-binding site is contributed by threonine 78. S-adenosyl-L-methionine contacts are provided by residues glycine 80 and 122–124 (SPK).

This sequence belongs to the radical SAM superfamily. 7-carboxy-7-deazaguanine synthase family. As to quaternary structure, homodimer. The cofactor is [4Fe-4S] cluster. S-adenosyl-L-methionine serves as cofactor. Requires Mg(2+) as cofactor.

The enzyme catalyses 6-carboxy-5,6,7,8-tetrahydropterin + H(+) = 7-carboxy-7-deazaguanine + NH4(+). Its pathway is purine metabolism; 7-cyano-7-deazaguanine biosynthesis. Its function is as follows. Catalyzes the complex heterocyclic radical-mediated conversion of 6-carboxy-5,6,7,8-tetrahydropterin (CPH4) to 7-carboxy-7-deazaguanine (CDG), a step common to the biosynthetic pathways of all 7-deazapurine-containing compounds. The sequence is that of 7-carboxy-7-deazaguanine synthase from Neisseria meningitidis serogroup B (strain ATCC BAA-335 / MC58).